We begin with the raw amino-acid sequence, 177 residues long: Large ribosomal subunit protein uL6 (177 aa).

It belongs to the universal ribosomal protein uL6 family. Part of the 50S ribosomal subunit.

Functionally, this protein binds to the 23S rRNA, and is important in its secondary structure. It is located near the subunit interface in the base of the L7/L12 stalk, and near the tRNA binding site of the peptidyltransferase center. This Mannheimia succiniciproducens (strain KCTC 0769BP / MBEL55E) protein is Large ribosomal subunit protein uL6.